Consider the following 59-residue polypeptide: UPF0434 protein SO_2800 (59 aa).

This sequence belongs to the UPF0434 family.

The chain is UPF0434 protein SO_2800 from Shewanella oneidensis (strain ATCC 700550 / JCM 31522 / CIP 106686 / LMG 19005 / NCIMB 14063 / MR-1).